A 141-amino-acid polypeptide reads, in one-letter code: UPF0310 protein SSA_0254 (141 aa).

It belongs to the UPF0310 family.

In Streptococcus sanguinis (strain SK36), this protein is UPF0310 protein SSA_0254.